Consider the following 348-residue polypeptide: Protein-glutamate methylesterase/protein-glutamine glutaminase 2 (348 aa).

Residues 5–122 (KVLIIDDSAL…DLGLSQYRDE (118 aa)) enclose the Response regulatory domain. Position 56 is a 4-aspartylphosphate (Asp56). In terms of domain architecture, CheB-type methylesterase spans 157-348 (SLKTGFLCAI…AANIIKHALK (192 aa)). Residues Ser169, His195, and Asp291 contribute to the active site.

It belongs to the CheB family. Phosphorylated by CheA. Phosphorylation of the N-terminal regulatory domain activates the methylesterase activity.

It is found in the cytoplasm. It carries out the reaction [protein]-L-glutamate 5-O-methyl ester + H2O = L-glutamyl-[protein] + methanol + H(+). It catalyses the reaction L-glutaminyl-[protein] + H2O = L-glutamyl-[protein] + NH4(+). Functionally, involved in chemotaxis. Part of a chemotaxis signal transduction system that modulates chemotaxis in response to various stimuli. Catalyzes the demethylation of specific methylglutamate residues introduced into the chemoreceptors (methyl-accepting chemotaxis proteins or MCP) by CheR. Also mediates the irreversible deamidation of specific glutamine residues to glutamic acid. This Saccharophagus degradans (strain 2-40 / ATCC 43961 / DSM 17024) protein is Protein-glutamate methylesterase/protein-glutamine glutaminase 2.